The primary structure comprises 273 residues: Histidine racemase (273 aa).

Cysteine 72 (proton acceptor) is an active-site residue. Cysteine 211 (proton donor) is an active-site residue.

The protein belongs to the histidine racemase family. In terms of assembly, homodimer.

The protein localises to the cytoplasm. The catalysed reaction is L-histidine = D-histidine. Its function is as follows. Isomerase that catalyzes the conversion of L-histidine to D-histidine. Functions the biosynthesis of the metallophore staphylopine, which is involved in the acquisition of nickel, cobalt, zinc, copper, and iron, and thus enables bacterial growth inside the host, where metal access is limited. Therefore, this enzyme probably contributes to staphylococcal virulence. The reaction is reversible in vitro, the enzyme can produce D-histidine from the L-stereoisomer and vice versa. Appears to be specific for histidine as it cannot use other amino acids as substrate, including L-alanine and L-methionine. In Staphylococcus aureus (strain Mu50 / ATCC 700699), this protein is Histidine racemase.